The sequence spans 220 residues: Uracil-DNA glycosylase (220 aa).

Asp65 functions as the Proton acceptor in the catalytic mechanism.

It belongs to the uracil-DNA glycosylase (UDG) superfamily. UNG family.

The protein resides in the cytoplasm. The catalysed reaction is Hydrolyzes single-stranded DNA or mismatched double-stranded DNA and polynucleotides, releasing free uracil.. Functionally, excises uracil residues from the DNA which can arise as a result of misincorporation of dUMP residues by DNA polymerase or due to deamination of cytosine. This is Uracil-DNA glycosylase from Bacteroides thetaiotaomicron (strain ATCC 29148 / DSM 2079 / JCM 5827 / CCUG 10774 / NCTC 10582 / VPI-5482 / E50).